Reading from the N-terminus, the 554-residue chain is Phosphomethylpyrimidine synthase (554 aa).

Substrate is bound by residues asparagine 188, methionine 217, tyrosine 246, histidine 282, 302 to 304, 343 to 346, and glutamate 382; these read SRG and DGLR. Residue histidine 386 participates in Zn(2+) binding. Tyrosine 409 lines the substrate pocket. Histidine 450 is a Zn(2+) binding site. 3 residues coordinate [4Fe-4S] cluster: cysteine 530, cysteine 533, and cysteine 538.

It belongs to the ThiC family. In terms of assembly, homodimer. [4Fe-4S] cluster serves as cofactor.

The catalysed reaction is 5-amino-1-(5-phospho-beta-D-ribosyl)imidazole + S-adenosyl-L-methionine = 4-amino-2-methyl-5-(phosphooxymethyl)pyrimidine + CO + 5'-deoxyadenosine + formate + L-methionine + 3 H(+). It participates in cofactor biosynthesis; thiamine diphosphate biosynthesis. Functionally, catalyzes the synthesis of the hydroxymethylpyrimidine phosphate (HMP-P) moiety of thiamine from aminoimidazole ribotide (AIR) in a radical S-adenosyl-L-methionine (SAM)-dependent reaction. The polypeptide is Phosphomethylpyrimidine synthase (Coxiella burnetii (strain Dugway 5J108-111)).